The following is a 422-amino-acid chain: GPI mannosyltransferase 1 (422 aa).

A run of 8 helical transmembrane segments spans residues 10-30 (TTPL…YGIY), 82-102 (FPAF…WLIL), 162-182 (IILG…PAIV), 216-236 (LKFG…MFAI), 282-302 (IESF…PLAL), 327-347 (SQYF…SSFL), 352-372 (LGIF…QQGY), and 385-405 (GLWL…GVII).

The protein belongs to the PIGM family.

The protein localises to the endoplasmic reticulum membrane. It participates in glycolipid biosynthesis; glycosylphosphatidylinositol-anchor biosynthesis. Mannosyltransferase involved in glycosylphosphatidylinositol-anchor biosynthesis. Transfers the first alpha-1,4-mannose to GlcN-acyl-PI during GPI precursor assembly. Required for cell wall integrity. This chain is GPI mannosyltransferase 1 (GPI14), found in Gibberella zeae (strain ATCC MYA-4620 / CBS 123657 / FGSC 9075 / NRRL 31084 / PH-1) (Wheat head blight fungus).